Consider the following 417-residue polypeptide: MSLSNKLSVKDLDVAGKRVFIRVDFNVPLDGKTITNNQRIVAALPTIKYVEEHKPKYIVLASHLGRPNGERNDKYSLAPVATELEKLLGQKVTFLNDCVGPEVTKAVENAKDGEIFLLENLRYHIEEEGSSKDKDGKKVKADPEAVKKFRQELTSLADVYINDAFGTAHRAHSSMVGLEVPQRAAGFLMSKELEYFAKALENPERPFLAILGGAKVSDKIQLIDNLLDKVDMLIVGGGMAFTFKKILNKMPIGDSLFDEAGAKNVEHLVEKAKKNNVELILPVDFVTADKFDKDAKTSSATDAEGIPDNWMGLDCGPKSVELFQQAVAKAKTIVWNGPPGVFEFEKFANGTKSLLDAAVKSAENGNIVIIGGGDTATVAKKYGVVEKLSHVSTGGGASLELLEGKDLPGVVALSNKN.

Positions 23, 24, 25, 26, 38, 39, 62, 63, 65, 66, 121, 122, 169, and 170 each coordinate (2R)-3-phosphoglycerate. Gly-213 provides a ligand contact to ADP. Gly-213 contacts CDP. AMP-binding residues include Ala-214 and Lys-215. Ala-214 serves as a coordination point for ATP. Ala-214 provides a ligand contact to Mg(2+). Asp-218 is a binding site for CDP. Asp-218 serves as a coordination point for Mg(2+). Lys-219 contributes to the AMP binding site. Lys-219 provides a ligand contact to ATP. An ADP-binding site is contributed by Gly-237. Gly-237 is a binding site for CDP. AMP is bound by residues Gly-238 and Gly-312. ATP-binding residues include Gly-238 and Gly-312. CDP-binding residues include Gly-337 and Phe-342. Position 342 (Phe-342) interacts with ADP. An AMP-binding site is contributed by Glu-343. ATP contacts are provided by Glu-343, Asp-374, and Thr-375. Mg(2+) is bound at residue Asp-374.

The protein belongs to the phosphoglycerate kinase family. Monomer. The cofactor is Mg(2+).

Its subcellular location is the cytoplasm. It localises to the secreted. The protein resides in the cell wall. It is found in the mitochondrion. It catalyses the reaction (2R)-3-phosphoglycerate + ATP = (2R)-3-phospho-glyceroyl phosphate + ADP. Its pathway is carbohydrate degradation; glycolysis; pyruvate from D-glyceraldehyde 3-phosphate: step 2/5. Catalyzes one of the two ATP producing reactions in the glycolytic pathway via the reversible conversion of 1,3-diphosphoglycerate to 3-phosphoglycerate. Both L- and D- forms of purine and pyrimidine nucleotides can be used as substrates, but the activity is much lower on pyrimidines. Negatively regulates the biosynthesis of acetyl-CoA from pyruvate in the mitochondrion. The sequence is that of Phosphoglycerate kinase (PGK1) from Candida albicans (strain SC5314 / ATCC MYA-2876) (Yeast).